The chain runs to 249 residues: Probable septum site-determining protein MinC (249 aa).

Residues 115 to 144 (PTAVSPPPPPPPPPARAEPAPPAARPAPGR) form a disordered region. Pro residues predominate over residues 118-139 (VSPPPPPPPPPARAEPAPPAAR).

This sequence belongs to the MinC family. As to quaternary structure, interacts with MinD and FtsZ.

In terms of biological role, cell division inhibitor that blocks the formation of polar Z ring septums. Rapidly oscillates between the poles of the cell to destabilize FtsZ filaments that have formed before they mature into polar Z rings. Prevents FtsZ polymerization. The sequence is that of Probable septum site-determining protein MinC from Xanthomonas axonopodis pv. citri (strain 306).